Reading from the N-terminus, the 353-residue chain is Protein RecA (353 aa).

Residue 67–74 (GPESSGKT) participates in ATP binding.

Belongs to the RecA family.

Its subcellular location is the cytoplasm. Its function is as follows. Can catalyze the hydrolysis of ATP in the presence of single-stranded DNA, the ATP-dependent uptake of single-stranded DNA by duplex DNA, and the ATP-dependent hybridization of homologous single-stranded DNAs. It interacts with LexA causing its activation and leading to its autocatalytic cleavage. In Salmonella agona (strain SL483), this protein is Protein RecA.